We begin with the raw amino-acid sequence, 1111 residues long: Atrial natriuretic peptide-converting enzyme (1111 aa).

The Cytoplasmic segment spans residues 1 to 112; the sequence is MGRVSFNVRV…QKLVTANLLR (112 aa). The DDNN motif signature appears at 93–96; sequence ADSS. A helical; Signal-anchor for type II membrane protein membrane pass occupies residues 113–133; that stretch reads FLLLVLIPCICALIVLLAILL. Over 134–1111 the chain is Extracellular; it reads SFVGTLKKVY…QTFLQKKSQG (978 aa). Asparagine 147 carries N-linked (GlcNAc...) asparagine glycosylation. The 127-residue stretch at 199–325 folds into the FZ 1 domain; it reads GNTSTCVNIT…SDASRICFSL (127 aa). Cystine bridges form between cysteine 204–cysteine 264, cysteine 212–cysteine 257, cysteine 248–cysteine 288, cysteine 277–cysteine 322, cysteine 281–cysteine 305, cysteine 335–cysteine 348, cysteine 343–cysteine 361, cysteine 355–cysteine 370, cysteine 372–cysteine 384, cysteine 379–cysteine 397, cysteine 391–cysteine 406, cysteine 408–cysteine 421, cysteine 416–cysteine 434, cysteine 428–cysteine 443, cysteine 445–cysteine 458, cysteine 453–cysteine 471, cysteine 465–cysteine 480, cysteine 521–cysteine 584, cysteine 529–cysteine 577, cysteine 568–cysteine 606, cysteine 595–cysteine 636, cysteine 599–cysteine 623, cysteine 646–cysteine 658, cysteine 653–cysteine 671, cysteine 665–cysteine 680, cysteine 682–cysteine 696, cysteine 690–cysteine 709, cysteine 703–cysteine 718, cysteine 721–cysteine 733, cysteine 728–cysteine 746, and cysteine 740–cysteine 755. Asparagine 296 is a glycosylation site (N-linked (GlcNAc...) asparagine). LDL-receptor class A domains lie at 334–371, 371–407, 407–444, and 444–481; these read LCGG…AHCN, NCSE…QNCD, DCNL…VNCS, and SCPS…ENCS. Asparagine 409 carries an N-linked (GlcNAc...) asparagine glycan. Positions 516-639 constitute an FZ 2 domain; the sequence is SNCSHCEPIT…SSDNQTCLLP (124 aa). N-linked (GlcNAc...) asparagine glycosylation is present at asparagine 535. 3 LDL-receptor class A domains span residues 645–681, 681–719, and 720–756; these read ECSP…ENCG, GCKE…KNCS, and FCQD…WGCV. The SRCR domain occupies 756-851; the sequence is VTLSKNGNSS…SGSEISLLCT (96 aa). A glycan (N-linked (GlcNAc...) asparagine) is linked at asparagine 763. 4 cysteine pairs are disulfide-bonded: cysteine 855-cysteine 977, cysteine 893-cysteine 909, cysteine 991-cysteine 1056, and cysteine 1020-cysteine 1035. One can recognise a Peptidase S1 domain in the interval 867–1100; it reads ILGGRTSRPG…FVDWIERQIY (234 aa). Active-site charge relay system residues include histidine 908 and aspartate 957. Catalysis depends on serine 1050, which acts as the Charge relay system.

It belongs to the peptidase S1 family. In terms of processing, N-glycosylated; required for processing and activation. Post-translationally, activated through proteolytic processing by a trypsin-like protease; cleaved into a N-terminal propeptide and an activated corin protease fragment. Atrial natriuretic peptide-converting enzyme, 180 kDa soluble fragment is produced by cleavage by ADAM10. Cleavage by ADAM10 to produce soluble 180 kDa soluble fragment takes place after the transmembrane region and before FZ 1. A disulfide bond links the activated corin protease fragment and the N-terminal propeptide. The disulfide bond also links the activated corin protease fragment with Atrial natriuretic peptide-converting enzyme, 180 kDa soluble fragment. In terms of tissue distribution, specifically expressed in heart. Also detected in kidney, aorta, brain and testis. In kidney, present in epithelial cells, with segmental expression in the proximal tubule, thick ascending limb, connecting tubule, and throughout the collecting duct (at protein level).

Its subcellular location is the cell membrane. It localises to the cytoplasmic vesicle. It is found in the secreted. Its function is as follows. Serine-type endopeptidase involved in atrial natriuretic peptide (NPPA) processing. Converts through proteolytic cleavage the non-functional propeptide NPPA into the active hormone, thereby regulating blood pressure in heart and promoting natriuresis, diuresis and vasodilation. Proteolytic cleavage of pro-NPPA also plays a role in female pregnancy by promoting trophoblast invasion and spiral artery remodeling in uterus. Also acts as a regulator of sodium reabsorption in kidney. May also process pro-NPPB the B-type natriuretic peptide. This chain is Atrial natriuretic peptide-converting enzyme (Corin), found in Rattus norvegicus (Rat).